The sequence spans 178 residues: Peptide deformylase (178 aa).

Fe cation is bound by residues C102 and H144. Residue E145 is part of the active site. H148 serves as a coordination point for Fe cation.

It belongs to the polypeptide deformylase family. Fe(2+) serves as cofactor.

It carries out the reaction N-terminal N-formyl-L-methionyl-[peptide] + H2O = N-terminal L-methionyl-[peptide] + formate. Its function is as follows. Removes the formyl group from the N-terminal Met of newly synthesized proteins. Requires at least a dipeptide for an efficient rate of reaction. N-terminal L-methionine is a prerequisite for activity but the enzyme has broad specificity at other positions. The protein is Peptide deformylase of Leptospira interrogans serogroup Icterohaemorrhagiae serovar copenhageni (strain Fiocruz L1-130).